Consider the following 574-residue polypeptide: Sorting nexin-33 (574 aa).

In terms of domain architecture, SH3 spans 1–61 (MALKGRALYD…PASYVEIVRP (61 aa)). Ser77 carries the post-translational modification Phosphoserine. Residues 79-90 (GTQGSLYSSPSM) show a composition bias toward polar residues. Positions 79–116 (GTQGSLYSSPSMASPARSGGGSGFLSNPGSFEDDDDDD) are disordered. Residue Ser92 is modified to Phosphoserine. Residues 230 to 340 (FACSIEDPTK…HFLSCLDDKQ (111 aa)) enclose the PX domain. The region spanning 371 to 574 (LQDVEDRVDT…EKTLHMYDHL (204 aa)) is the BAR domain.

Belongs to the sorting nexin family. In terms of assembly, homodimer (via BAR domain). Interacts with ADAM15. Interacts with FASLG. Interacts (via SH3 domain) with DNM1 and DNM2. Interacts with WASL. Interacts with FCHSD1 (via the F-BAR domain). Phosphorylated. In terms of tissue distribution, detected in brain (at protein level).

The protein resides in the cytoplasm. It localises to the cytosol. It is found in the membrane. Its subcellular location is the cytoplasmic vesicle membrane. In terms of biological role, plays a role in the reorganization of the cytoskeleton, endocytosis and cellular vesicle trafficking via its interactions with membranes, WASL, DNM1 and DNM2. Acts both during interphase and at the end of mitotic cell divisions. Required for efficient progress through mitosis and cytokinesis. Required for normal formation of the cleavage furrow at the end of mitosis. Modulates endocytosis of cell-surface proteins, such as APP and PRNP; this then modulates the secretion of APP and PRNP peptides. Promotes membrane tubulation (in vitro). May promote the formation of macropinosomes. The protein is Sorting nexin-33 (Snx33) of Mus musculus (Mouse).